Consider the following 1415-residue polypeptide: DNA-directed RNA polymerase subunit beta' (1415 aa).

Residues C72, C74, C87, and C90 each contribute to the Zn(2+) site. Residues D463, D465, and D467 each coordinate Mg(2+). Zn(2+) is bound by residues C811, C885, C892, and C895.

Belongs to the RNA polymerase beta' chain family. In terms of assembly, the RNAP catalytic core consists of 2 alpha, 1 beta, 1 beta' and 1 omega subunit. When a sigma factor is associated with the core the holoenzyme is formed, which can initiate transcription. The cofactor is Mg(2+). Requires Zn(2+) as cofactor.

It carries out the reaction RNA(n) + a ribonucleoside 5'-triphosphate = RNA(n+1) + diphosphate. DNA-dependent RNA polymerase catalyzes the transcription of DNA into RNA using the four ribonucleoside triphosphates as substrates. The protein is DNA-directed RNA polymerase subunit beta' of Cereibacter sphaeroides (strain ATCC 17023 / DSM 158 / JCM 6121 / CCUG 31486 / LMG 2827 / NBRC 12203 / NCIMB 8253 / ATH 2.4.1.) (Rhodobacter sphaeroides).